The sequence spans 274 residues: MALGNALVEARDRVAWRLNIKVAQQAQKLVYRYATRRLKDDDVVFLNYGYEEDPPMGIPLSESDELNRYSIQLYHSTAAQADVEGKRVLEVGCGHGGGASYLARTFRPATYTGLDLNSDGINFCRRRHNIAGLEFVQGDAQDLPFPDKNFDAVLNVESSHLYPRFDVFLTEVARVLRPGGYFLYTDARPRYDIPEWERALADAPLQMLSQRAINFEVVRGMEKNLDALESVVDRVAPALLRDWIQKYGPARRAYEELRENTTEYRMYCFVKPAE.

It belongs to the methyltransferase superfamily.

It carries out the reaction a fatty acid + S-adenosyl-L-methionine = a fatty acid methyl ester + S-adenosyl-L-homocysteine. In terms of biological role, O-methyltransferase that modifies the hydroxy group of the fatty acids. Oleate is the most effective fatty acid acceptor. The polypeptide is Fatty-acid O-methyltransferase (mtf2) (Mycolicibacterium smegmatis (strain ATCC 700084 / mc(2)155) (Mycobacterium smegmatis)).